A 199-amino-acid polypeptide reads, in one-letter code: Fe/S biogenesis protein NfuA (199 aa).

Positions 151 and 154 each coordinate [4Fe-4S] cluster.

Belongs to the NfuA family. In terms of assembly, homodimer. Requires [4Fe-4S] cluster as cofactor.

Its function is as follows. Involved in iron-sulfur cluster biogenesis. Binds a 4Fe-4S cluster, can transfer this cluster to apoproteins, and thereby intervenes in the maturation of Fe/S proteins. Could also act as a scaffold/chaperone for damaged Fe/S proteins. This Xanthomonas axonopodis pv. citri (strain 306) protein is Fe/S biogenesis protein NfuA.